The sequence spans 167 residues: MADEATRRVVSEIPVLKTNAGPRDRELWVQRLKEEYQSLIRYVENNKNSDNDWFRLESNKEGTRWFGKCWYIHDFLKYEFDIEFEIPITYPTTAPEIAVPELDGKTAKMYRGGKICLTDHFKPLWARNVPKFGLAHLMALGLGPWLAVEVPDLIQKGVIQHKEKCSQ.

C116 (glycyl thioester intermediate) is an active-site residue. K122 is covalently cross-linked (Glycyl lysine isopeptide (Lys-Gly) (interchain with G-Cter in UFM1)).

This sequence belongs to the ubiquitin-conjugating enzyme family. UFC1 subfamily. Interacts with UBA5 (via C-terminus). Interacts with UFL1. Interacts with UFM1. Interacts with KIRREL3. Ufmylated at Lys-122. Deufmylated by UFSP1.

Its function is as follows. E2-like enzyme which specifically catalyzes the second step in ufmylation. Accepts the ubiquitin-like modifier UFM1 from the E1 enzyme UBA5 and forms an intermediate with UFM1 via a thioester linkage. Ufmylation is involved in various processes, such as ribosome recycling, response to DNA damage, interferon response or reticulophagy (also called ER-phagy). This is Ubiquitin-fold modifier-conjugating enzyme 1 from Mus musculus (Mouse).